The primary structure comprises 1030 residues: ATPase MORC2A (1030 aa).

Position 2 is an N-acetylalanine (alanine 2). ATP is bound by residues asparagine 39, 87 to 89, and 99 to 105; these read SAK and QYGNGLK. Asparagine 39 contacts Mg(2+). A coiled-coil region spans residues 285 to 362; sequence KTRAEQEVKK…KDAKQRALKE (78 aa). Lysine 427 serves as a coordination point for ATP. The CW-type zinc-finger motif lies at 490 to 544; that stretch reads AMEIPTTIQCDLCLKWRTLPFQLSSVETDYPDTWVCSMNPDPEQDRCEASEQKQK. The Zn(2+) site is built by cysteine 499, cysteine 502, cysteine 525, and cysteine 536. A disordered region spans residues 530–791; that stretch reads DPEQDRCEAS…HPAELRKAQK (262 aa). Composition is skewed to basic and acidic residues over residues 532 to 543 and 550 to 577; these read EQDRCEASEQKQ and LKKD…KLEA. Positions 555-583 form a coiled coil; sequence KTQEEKQKQLTEKIRQQQEKLEALQKTTP. The residue at position 582 (threonine 582) is a Phosphothreonine. A Phosphoserine modification is found at serine 614. A compositionally biased stretch (polar residues) spans 629 to 646; the sequence is PSIQTPRPSTQLRKTSVI. Glycyl lysine isopeptide (Lys-Gly) (interchain with G-Cter in SUMO2) cross-links involve residues lysine 650 and lysine 702. Residues 693-702 are compositionally biased toward low complexity; that stretch reads PPLSLIPSSK. Phosphoserine is present on serine 703. Lysine 714 is covalently cross-linked (Glycyl lysine isopeptide (Lys-Gly) (interchain with G-Cter in SUMO2)). Serine 728 is modified (phosphoserine). Threonine 731 carries the post-translational modification Phosphothreonine. Serine 737 and serine 741 each carry phosphoserine. A coiled-coil region spans residues 738 to 775; it reads LAVSDEEEAEEEAEKRRERCKRGKLAVKEEKKEANELS. Over residues 763 to 772 the composition is skewed to basic and acidic residues; sequence AVKEEKKEAN. Lysine 765 participates in a covalent cross-link: Glycyl lysine isopeptide (Lys-Gly) (interchain with G-Cter in SUMO2). Residues serine 775 and serine 777 each carry the phosphoserine modification. A compositionally biased stretch (basic and acidic residues) spans 779–791; that stretch reads GEDHPAELRKAQK. Lysine 817 is covalently cross-linked (Glycyl lysine isopeptide (Lys-Gly) (interchain with G-Cter in SUMO2)). Position 834 is a phosphothreonine (threonine 834). Over residues 837-849 the composition is skewed to basic and acidic residues; sequence DRWVEKGSEDVRL. Disordered regions lie at residues 837-874 and 882-901; these read DRWV…EAMV and PEPS…ATSP. Phosphoserine is present on residues serine 854 and serine 859. Residues 856–865 are compositionally biased toward polar residues; the sequence is EHQSPDTQQE. Lysine 930 participates in a covalent cross-link: Glycyl lysine isopeptide (Lys-Gly) (interchain with G-Cter in SUMO2). A coiled-coil region spans residues 966–1011; sequence RADSRAKASEESLRTSEKKLRETEEKLQKLRTNIVALLQKVQEDID.

As to quaternary structure, homodimerizes upon ATP-binding and dissociate upon ATP hydrolysis; homodimerization is required for gene silencing. Binds histone H3 independently of the methylation status at 'Lys-9'. Interacts with HDAC4. Interacts with FAM208A/TASOR and MPHOSPH8; the interactions associate MORC2 with the HUSH complex which recruits MORC2 to heterochromatic loci. Interacts with Morc2b. In terms of processing, phosphorylated by PAK1 at Ser-737 upon DNA damage. Phosphorylation is required for ATPase activity and recruitment to damaged chromatin. In terms of tissue distribution, expressed in the axons and Schwann cells of peripheral nerves. Expressed in testes.

The protein localises to the nucleus. It localises to the cytoplasm. It is found in the cytosol. The protein resides in the chromosome. Its subcellular location is the nucleus matrix. It carries out the reaction ATP + H2O = ADP + phosphate + H(+). With respect to regulation, ATPase activity is dependent of phosphorylation by PAK1 and presence of DNA. Functionally, essential for epigenetic silencing by the HUSH complex. Recruited by HUSH to target site in heterochromatin, the ATPase activity and homodimerization are critical for HUSH-mediated silencing. Represses germ cell-related genes and L1 retrotransposons in collaboration with SETDB1 and the HUSH complex, the silencing is dependent of repressive epigenetic modifications, such as H3K9me3 mark. Silencing events often occur within introns of transcriptionally active genes, and lead to the down-regulation of host gene expression. During DNA damage response, regulates chromatin remodeling through ATP hydrolysis. During DNA damage response, may regulate chromatin remodeling through ATP hydrolysis. This chain is ATPase MORC2A, found in Mus musculus (Mouse).